The following is a 598-amino-acid chain: Probable translation initiation factor IF-2 (598 aa).

In terms of domain architecture, tr-type G spans 3-225 (LRCPIVSVLG…GLAQRFLEQK (223 aa)). The G1 stretch occupies residues 12 to 19 (GHVDHGKT). 12 to 19 (GHVDHGKT) lines the GTP pocket. A G2 region spans residues 37–41 (GITQH). The G3 stretch occupies residues 76–79 (DTPG). Residues 76 to 80 (DTPGH) and 130 to 133 (NKVD) contribute to the GTP site. Positions 130 to 133 (NKVD) are G4. A G5 region spans residues 200-202 (SAM).

Belongs to the TRAFAC class translation factor GTPase superfamily. Classic translation factor GTPase family. IF-2 subfamily.

Function in general translation initiation by promoting the binding of the formylmethionine-tRNA to ribosomes. Seems to function along with eIF-2. The polypeptide is Probable translation initiation factor IF-2 (Methanococcus maripaludis (strain DSM 14266 / JCM 13030 / NBRC 101832 / S2 / LL)).